Reading from the N-terminus, the 840-residue chain is Serotype-specific mannosyltransferase WbdA (840 aa).

Residues 2 to 399 form an alpha-(1-&gt;2)-mannosyltransferase region; it reads HILIDVQGYQ…WANTAHLAIE (398 aa). The alpha-(1-&gt;3)-mannosyltransferase stretch occupies residues 456-829; that stretch reads KLLVDISVLA…WKQSAEFLLK (374 aa).

The protein belongs to the glycosyltransferase group 1 family. Glycosyltransferase 4 subfamily. Monomer. Interacts with the C-terminal region of WbdD. Interacts with WbdD via a surface-exposed alpha-helix in the C-terminal mannosyltransferase domain. However, the C-terminal domain is unable to interact with WbdD in the absence of its N-terminal partner.

The protein resides in the cell inner membrane. The catalysed reaction is [alpha-D-Man-(1-&gt;3)-alpha-D-Man-(1-&gt;3)-alpha-D-Man-(1-&gt;2)-alpha-D-Man-(1-&gt;2)](n)-alpha-D-Man-(1-&gt;3)-alpha-D-Man-(1-&gt;3)-alpha-D-Man-(1-&gt;3)-alpha-D-GlcNAc-di-trans,octa-cis-undecaprenyl diphosphate + 2 GDP-alpha-D-mannose = alpha-D-Man-(1-&gt;2)-alpha-D-Man-(1-&gt;2)-[alpha-D-Man-(1-&gt;3)-alpha-D-Man-(1-&gt;3)-alpha-D-Man-(1-&gt;2)-alpha-D-Man-(1-&gt;2)](n)-alpha-D-Man-(1-&gt;3)-alpha-D-Man-(1-&gt;3)-alpha-D-Man-(1-&gt;3)-alpha-D-GlcNAc-di-trans,octa-cis-undecaprenyl diphosphate + 2 GDP + 2 H(+). It catalyses the reaction alpha-D-Man-(1-&gt;2)-alpha-D-Man-(1-&gt;2)-[alpha-D-Man-(1-&gt;3)-alpha-D-Man-(1-&gt;3)-alpha-D-Man-(1-&gt;2)-alpha-D-Man-(1-&gt;2)](n)-alpha-D-Man-(1-&gt;3)-alpha-D-Man-(1-&gt;3)-alpha-D-Man-(1-&gt;3)-alpha-D-GlcNAc-di-trans,octa-cis-undecaprenyl diphosphate + 2 GDP-alpha-D-mannose = [alpha-D-Man-(1-&gt;3)-alpha-D-Man-(1-&gt;3)-alpha-D-Man-(1-&gt;2)-alpha-D-Man-(1-&gt;2)](n+1)-alpha-D-Man-(1-&gt;3)-alpha-D-Man-(1-&gt;3)-alpha-D-Man-(1-&gt;3)-alpha-D-GlcNAc-di-trans,octa-cis-undecaprenyl diphosphate + 2 GDP + 2 H(+). Its pathway is bacterial outer membrane biogenesis; LPS O-antigen biosynthesis. Its activity is regulated as follows. The alpha-(1-&gt;2)-mannosyltransferase activity of the N-terminal domain is regulated by the activity of the C-terminal alpha-(1-&gt;3)-mannosyltransferase. The relative concentration of WbdA and WbdD is critical in determining the O polysaccharide (OPS) modal chain length. OPS chain length increases with increasing concentration of WbdA, but the maximum length does not increase beyond the wild-type modal length, despite substantial increases in WbdA concentration. Mannosyltransferase involved in the biosynthesis of the repeat unit of the lipopolysaccharide (LPS) O-antigen region. Catalyzes the polymerization of a tetrasaccharide repeat unit containing two alpha-(1-&gt;3)- and two alpha-(1-&gt;2)-linked mannopyranose residues. Extension is terminated by the action of the chain terminator bifunctional methyltransferase/kinase WbdD. This is Serotype-specific mannosyltransferase WbdA from Escherichia coli.